A 199-amino-acid polypeptide reads, in one-letter code: uncharacterized protein (199 aa).

The next 4 membrane-spanning stretches (helical) occupy residues 40–60 (LLIC…FCFL), 86–106 (VLTG…TFPF), 117–137 (TSWP…LTSS), and 166–186 (FLLA…ALIL).

The protein resides in the membrane. This is an uncharacterized protein from Saccharomyces cerevisiae (strain ATCC 204508 / S288c) (Baker's yeast).